Reading from the N-terminus, the 713-residue chain is Probable 1-deoxy-D-xylulose-5-phosphate synthase 2, chloroplastic (713 aa).

The N-terminal 30 residues, 1–30, are a transit peptide targeting the chloroplast; that stretch reads MALQASSSPSMFRAIPTNTNASCRRKLQVR. Residues histidine 140 and 181-183 each bind thiamine diphosphate; that span reads GHS. Residue aspartate 212 coordinates Mg(2+). Thiamine diphosphate contacts are provided by residues 213–214, asparagine 241, tyrosine 362, and glutamate 444; that span reads GA. Asparagine 241 is a binding site for Mg(2+).

The protein belongs to the transketolase family. DXPS subfamily. In terms of assembly, homodimer. Mg(2+) is required as a cofactor. Requires thiamine diphosphate as cofactor.

It is found in the plastid. The protein resides in the chloroplast. The catalysed reaction is D-glyceraldehyde 3-phosphate + pyruvate + H(+) = 1-deoxy-D-xylulose 5-phosphate + CO2. It participates in metabolic intermediate biosynthesis; 1-deoxy-D-xylulose 5-phosphate biosynthesis; 1-deoxy-D-xylulose 5-phosphate from D-glyceraldehyde 3-phosphate and pyruvate: step 1/1. In terms of biological role, catalyzes the acyloin condensation reaction between C atoms 2 and 3 of pyruvate and glyceraldehyde 3-phosphate to yield 1-deoxy-D-xylulose-5-phosphate (DXP). Is a limiting enzyme for plastidic isoprenoid biosynthesis and essential for chloroplast development. In Oryza sativa subsp. japonica (Rice), this protein is Probable 1-deoxy-D-xylulose-5-phosphate synthase 2, chloroplastic.